Reading from the N-terminus, the 173-residue chain is NADH-ubiquinone oxidoreductase chain 6 (173 aa).

Helical transmembrane passes span 1–21 (MTYF…AVAS), 27–47 (YGVV…LSLG), 48–68 (VSFV…VVFV), 87–107 (VVGY…VGGF), and 139–159 (CGVG…FVVL).

This sequence belongs to the complex I subunit 6 family.

The protein resides in the mitochondrion membrane. It carries out the reaction a ubiquinone + NADH + 5 H(+)(in) = a ubiquinol + NAD(+) + 4 H(+)(out). Core subunit of the mitochondrial membrane respiratory chain NADH dehydrogenase (Complex I) that is believed to belong to the minimal assembly required for catalysis. Complex I functions in the transfer of electrons from NADH to the respiratory chain. The immediate electron acceptor for the enzyme is believed to be ubiquinone. The polypeptide is NADH-ubiquinone oxidoreductase chain 6 (MT-ND6) (Aethia pygmaea (Whiskered auklet)).